Here is a 793-residue protein sequence, read N- to C-terminus: Flavin carrier protein 1 (793 aa).

Residues 1–21 form the signal peptide; it reads MQVLVTLWCLICTCLVLPVAA. Topologically, residues 22 to 163 are lumenal; sequence KKRTLTASSL…FFSNGKTVSQ (142 aa). Asparagine 143 carries N-linked (GlcNAc...) asparagine glycosylation. Residues 164–184 traverse the membrane as a helical segment; the sequence is IGVKWVTAVIAGIGLLTSAVL. Residues 185 to 194 are Cytoplasmic-facing; that stretch reads STFGNSTAAS. The helical transmembrane segment at 195–215 threads the bilayer; the sequence is HISANTMSLFLYFQSVAVVAM. The Lumenal portion of the chain corresponds to 216–223; that stretch reads QHVDSVPP. The chain crosses the membrane as a helical span at residues 224 to 244; that stretch reads IAAAWSENLAWSMGLIRITFM. The Cytoplasmic portion of the chain corresponds to 245-249; that stretch reads QKIFR. A helical membrane pass occupies residues 250–272; that stretch reads WYVEATGGSASLYLTATTMSVLT. Residues 273 to 317 are Lumenal-facing; sequence QRGLDYLKNTSVYKRAENVLYGNSNTLIFRGIKRMGYRMKIENTA. N-linked (GlcNAc...) asparagine glycosylation occurs at asparagine 281. A helical transmembrane segment spans residues 318-338; that stretch reads IVCTGFTFFVLCGYFLAGFIM. Topologically, residues 339 to 372 are cytoplasmic; it reads ACKYSIELCIRCGWMRSDRFYQFRKNWRSVLKGS. Residues 373 to 393 traverse the membrane as a helical segment; sequence LLRYIYIGFTQLTILSFWEFT. The Lumenal portion of the chain corresponds to 394–397; sequence ERDS. Residues 398 to 418 traverse the membrane as a helical segment; the sequence is AGVIVIACLFIVLSCGLMAWA. Over 419–461 the chain is Cytoplasmic; sequence AYRTIFFASKSVEMYNNPAALLYGDEYVLNKYGFFYTMFNAKH. Residues 462-482 form a helical membrane-spanning segment; sequence YWWNALLTTYILVKALFVGFA. The Lumenal segment spans residues 483–484; the sequence is QA. A helical membrane pass occupies residues 485 to 505; the sequence is SGKTQALAIFIIDLAYFVAII. Residues 506-516 lie on the Cytoplasmic side of the membrane; sequence RYKPYLDRPTN. A helical membrane pass occupies residues 517–537; the sequence is IVNIFICTVTLVNSFLFMFFS. The Lumenal portion of the chain corresponds to 538-551; that stretch reads NLFNQKYAVSAIMG. The helical transmembrane segment at 552-572 threads the bilayer; it reads WVFFIMNAAFSLLLLLMILAF. At 573 to 793 the chain is on the cytoplasmic side; sequence TTIILFSKNP…KANILDPDYL (221 aa). Serine 610 is subject to Phosphoserine. Phosphothreonine is present on threonine 626. Disordered regions lie at residues 649 to 674 and 689 to 731; these read YDDE…PTFS and KLGS…QESE. Residues 701–719 show a composition bias toward polar residues; it reads ITQQEVSPDRASSSPNSKS. 2 positions are modified to phosphoserine: serine 771 and serine 774.

This sequence belongs to the transient receptor potential (TRP) ion channel family.

It is found in the endoplasmic reticulum membrane. Its function is as follows. May be responsible for the transport of FAD into the endoplasmic reticulum lumen, where it is required for oxidative protein folding. This chain is Flavin carrier protein 1 (FLC1), found in Saccharomyces cerevisiae (strain ATCC 204508 / S288c) (Baker's yeast).